The primary structure comprises 373 residues: S-adenosylmethionine:tRNA ribosyltransferase-isomerase (373 aa).

The protein belongs to the QueA family. As to quaternary structure, monomer.

It localises to the cytoplasm. It carries out the reaction 7-aminomethyl-7-carbaguanosine(34) in tRNA + S-adenosyl-L-methionine = epoxyqueuosine(34) in tRNA + adenine + L-methionine + 2 H(+). It functions in the pathway tRNA modification; tRNA-queuosine biosynthesis. Its function is as follows. Transfers and isomerizes the ribose moiety from AdoMet to the 7-aminomethyl group of 7-deazaguanine (preQ1-tRNA) to give epoxyqueuosine (oQ-tRNA). The polypeptide is S-adenosylmethionine:tRNA ribosyltransferase-isomerase (Caulobacter sp. (strain K31)).